The following is a 622-amino-acid chain: Polypeptide N-acetylgalactosaminyltransferase 6 (622 aa).

The Cytoplasmic portion of the chain corresponds to 1-8 (MRLLRRRH). The chain crosses the membrane as a helical; Signal-anchor for type II membrane protein span at residues 9–28 (MAVRLVMVGSAFVLFLFILQ). At 29-622 (RDVSGREQAT…SDPHQHWLFI (594 aa)) the chain is on the lumenal side. Asn-86 carries an N-linked (GlcNAc...) asparagine glycan. Positions 103-135 (WERPPQDPNGPGADGKAFQKKEWTPQETQEKEE) are disordered. The span at 119 to 135 (AFQKKEWTPQETQEKEE) shows a compositional bias: basic and acidic residues. Residues 176-285 (LPATSVIIVF…HGWLEPLLAR (110 aa)) are catalytic subdomain A. 3 residues coordinate Mn(2+): Asp-269, His-271, and His-407. The catalytic subdomain B stretch occupies residues 348-410 (PIKSPTFAGG…PCSVVGHVFR (63 aa)). Asn-476 carries N-linked (GlcNAc...) asparagine glycosylation. The region spanning 507–622 (DHCLDVGENN…SDPHQHWLFI (116 aa)) is the Ricin B-type lectin domain. Cys-509 and Cys-527 are disulfide-bonded. UDP-N-acetyl-alpha-D-galactosamine is bound by residues Asp-511, Glu-514, His-528, and Asn-533. 2 disulfides stabilise this stretch: Cys-553-Cys-566 and Cys-597-Cys-610.

Belongs to the glycosyltransferase 2 family. GalNAc-T subfamily. It depends on Mn(2+) as a cofactor.

The protein localises to the golgi apparatus membrane. It carries out the reaction L-seryl-[protein] + UDP-N-acetyl-alpha-D-galactosamine = a 3-O-[N-acetyl-alpha-D-galactosaminyl]-L-seryl-[protein] + UDP + H(+). The catalysed reaction is L-threonyl-[protein] + UDP-N-acetyl-alpha-D-galactosamine = a 3-O-[N-acetyl-alpha-D-galactosaminyl]-L-threonyl-[protein] + UDP + H(+). It participates in protein modification; protein glycosylation. Its function is as follows. Catalyzes the initial reaction in O-linked oligosaccharide biosynthesis, the transfer of an N-acetyl-D-galactosamine residue to a serine or threonine residue on the protein receptor. May participate in synthesis of oncofetal fibronectin. Has activity toward MUC1A, MUC2, EA2 and fibronectin peptides. The polypeptide is Polypeptide N-acetylgalactosaminyltransferase 6 (GALNT6) (Bos taurus (Bovine)).